The chain runs to 235 residues: Homeobox protein Nkx-2.8 (235 aa).

Residues 51 to 67 show a composition bias toward polar residues; that stretch reads SDESGLETSPADSSQLA. Positions 51 to 86 are disordered; it reads SDESGLETSPADSSQLASLRRESPGSDPEKRRKRRV. Over residues 69 to 80 the composition is skewed to basic and acidic residues; that stretch reads LRRESPGSDPEK. A DNA-binding region (homeobox) is located at residues 81–140; it reads RRKRRVLFSKAQTLELERRFRQQRYLSAPEREQLARLLRLTPTQVKIWFQNHRYKLKRGR.

Belongs to the NK-2 homeobox family. As to expression, prominent expression in ventral brain and neural tube structures.

Its subcellular location is the nucleus. Functionally, possible role in the specification of a distinct subset of neurons. The chain is Homeobox protein Nkx-2.8 (Nkx2-8) from Mus musculus (Mouse).